Reading from the N-terminus, the 185-residue chain is Ribosome-recycling factor (185 aa).

This sequence belongs to the RRF family.

Its subcellular location is the cytoplasm. In terms of biological role, responsible for the release of ribosomes from messenger RNA at the termination of protein biosynthesis. May increase the efficiency of translation by recycling ribosomes from one round of translation to another. This chain is Ribosome-recycling factor, found in Salmonella arizonae (strain ATCC BAA-731 / CDC346-86 / RSK2980).